A 166-amino-acid polypeptide reads, in one-letter code: Deglycase PfpI (166 aa).

Residues 1–166 (MKILFLSANE…WMREFVKLLK (166 aa)) enclose the PfpI endopeptidase domain. The active-site Nucleophile is C100. The active site involves H101.

Belongs to the peptidase C56 family. As to quaternary structure, homooligomer. Exists in two functional species: the predominant form is a homohexamer that comprises about 90% of the total activity, and the minor form is trimeric.

It localises to the cytoplasm. The enzyme catalyses N(omega)-(1-hydroxy-2-oxopropyl)-L-arginyl-[protein] + H2O = lactate + L-arginyl-[protein] + H(+). It catalyses the reaction N(6)-(1-hydroxy-2-oxopropyl)-L-lysyl-[protein] + H2O = lactate + L-lysyl-[protein] + H(+). It carries out the reaction S-(1-hydroxy-2-oxopropyl)-L-cysteinyl-[protein] + H2O = lactate + L-cysteinyl-[protein] + H(+). The catalysed reaction is N(omega)-(1-hydroxy-2-oxoethyl)-L-arginyl-[protein] + H2O = L-arginyl-[protein] + glycolate + H(+). The enzyme catalyses N(6)-(1-hydroxy-2-oxoethyl)-L-lysyl-[protein] + H2O = glycolate + L-lysyl-[protein] + H(+). It catalyses the reaction S-(1-hydroxy-2-oxoethyl)-L-cysteinyl-[protein] + H2O = glycolate + L-cysteinyl-[protein] + H(+). In terms of biological role, deglycase that catalyzes the deglycation of the Maillard adducts formed between amino groups of proteins and reactive carbonyl groups of glyoxals. Thus, functions as a protein deglycase that repairs methylglyoxal- and glyoxal-glycated proteins, and releases repaired proteins and lactate or glycolate, respectively. Deglycates cysteine, arginine and lysine residues in proteins, and thus reactivates these proteins by reversing glycation by glyoxals. Thus, was shown to afford full protection against glycation of thioredoxin by glyoxal. Acts on early glycation intermediates (hemithioacetals and aminocarbinols), preventing the formation of advanced glycation endproducts (AGE) that cause irreversible damage. Prevents acrylamide formation in asparagine/glyoxal and asparagine/sugar mixtures, likely by degrading asparagine/glyoxal Maillard adducts formed at high temperatures. Also displays proteolytic activity. Cleaves at the carboxyl side of both basic and hydrophobic residues in the P1 position, indicating trypsin- and chymotrypsin-like specificities. This chain is Deglycase PfpI, found in Pyrococcus furiosus (strain ATCC 43587 / DSM 3638 / JCM 8422 / Vc1).